A 62-amino-acid polypeptide reads, in one-letter code: Photosystem II reaction center protein Z (62 aa).

The next 2 membrane-spanning stretches (helical) occupy residues 8–28 and 41–61; these read ALFA…VVLA and FSGI…NSFV.

It belongs to the PsbZ family. In terms of assembly, PSII is composed of 1 copy each of membrane proteins PsbA, PsbB, PsbC, PsbD, PsbE, PsbF, PsbH, PsbI, PsbJ, PsbK, PsbL, PsbM, PsbT, PsbY, PsbZ, Psb30/Ycf12, at least 3 peripheral proteins of the oxygen-evolving complex and a large number of cofactors. It forms dimeric complexes.

It is found in the plastid. Its subcellular location is the chloroplast thylakoid membrane. In terms of biological role, may control the interaction of photosystem II (PSII) cores with the light-harvesting antenna, regulates electron flow through the 2 photosystem reaction centers. PSII is a light-driven water plastoquinone oxidoreductase, using light energy to abstract electrons from H(2)O, generating a proton gradient subsequently used for ATP formation. The sequence is that of Photosystem II reaction center protein Z from Chlorella vulgaris (Green alga).